The sequence spans 118 residues: Small ribosomal subunit protein uS11 (118 aa).

This sequence belongs to the universal ribosomal protein uS11 family. As to quaternary structure, part of the 30S ribosomal subunit. Interacts with proteins S7 and S18. Binds to IF-3.

Functionally, located on the platform of the 30S subunit, it bridges several disparate RNA helices of the 16S rRNA. Forms part of the Shine-Dalgarno cleft in the 70S ribosome. The sequence is that of Small ribosomal subunit protein uS11 from Carsonella ruddii (strain PV).